Consider the following 379-residue polypeptide: Arginine biosynthesis bifunctional protein ArgJ (379 aa).

Residues Thr141, Lys163, Thr174, Glu252, Asn374, and Thr379 each coordinate substrate. Residue Thr174 is the Nucleophile of the active site.

This sequence belongs to the ArgJ family. In terms of assembly, heterotetramer of two alpha and two beta chains.

The protein localises to the cytoplasm. It carries out the reaction N(2)-acetyl-L-ornithine + L-glutamate = N-acetyl-L-glutamate + L-ornithine. It catalyses the reaction L-glutamate + acetyl-CoA = N-acetyl-L-glutamate + CoA + H(+). It participates in amino-acid biosynthesis; L-arginine biosynthesis; L-ornithine and N-acetyl-L-glutamate from L-glutamate and N(2)-acetyl-L-ornithine (cyclic): step 1/1. It functions in the pathway amino-acid biosynthesis; L-arginine biosynthesis; N(2)-acetyl-L-ornithine from L-glutamate: step 1/4. Functionally, catalyzes two activities which are involved in the cyclic version of arginine biosynthesis: the synthesis of N-acetylglutamate from glutamate and acetyl-CoA as the acetyl donor, and of ornithine by transacetylation between N(2)-acetylornithine and glutamate. In Aquifex aeolicus (strain VF5), this protein is Arginine biosynthesis bifunctional protein ArgJ.